Here is a 150-residue protein sequence, read N- to C-terminus: Deoxyuridine 5'-triphosphate nucleotidohydrolase (150 aa).

Substrate contacts are provided by residues 69–71, Asn-82, 86–88, and Met-96; these read RSG and LID.

Belongs to the dUTPase family. Mg(2+) serves as cofactor.

It catalyses the reaction dUTP + H2O = dUMP + diphosphate + H(+). Its pathway is pyrimidine metabolism; dUMP biosynthesis; dUMP from dCTP (dUTP route): step 2/2. In terms of biological role, this enzyme is involved in nucleotide metabolism: it produces dUMP, the immediate precursor of thymidine nucleotides and it decreases the intracellular concentration of dUTP so that uracil cannot be incorporated into DNA. This is Deoxyuridine 5'-triphosphate nucleotidohydrolase from Alcanivorax borkumensis (strain ATCC 700651 / DSM 11573 / NCIMB 13689 / SK2).